We begin with the raw amino-acid sequence, 408 residues long: Cobalt-precorrin-5B C(1)-methyltransferase (408 aa).

It belongs to the CbiD family.

It catalyses the reaction Co-precorrin-5B + S-adenosyl-L-methionine = Co-precorrin-6A + S-adenosyl-L-homocysteine. The protein operates within cofactor biosynthesis; adenosylcobalamin biosynthesis; cob(II)yrinate a,c-diamide from sirohydrochlorin (anaerobic route): step 6/10. Functionally, catalyzes the methylation of C-1 in cobalt-precorrin-5B to form cobalt-precorrin-6A. This is Cobalt-precorrin-5B C(1)-methyltransferase from Clostridioides difficile (strain 630) (Peptoclostridium difficile).